Here is a 397-residue protein sequence, read N- to C-terminus: uncharacterized protein (397 aa).

Belongs to the ROK (NagC/XylR) family.

This is an uncharacterized protein from Escherichia coli (strain K12).